A 135-amino-acid chain; its full sequence is Envelope glycoprotein N (135 aa).

The first 19 residues, 1–19 (MEWNTLVLGLLVLSVVASS), serve as a signal peptide directing secretion. The Virion surface segment spans residues 20 to 98 (NNTSTASTPR…SHMYELSLSS (79 aa)). A compositionally biased stretch (low complexity) spans 21–68 (NTSTASTPRPSSSTHASTTVKATTVATTSTTTATSTSSTTSAKPGSTT). The tract at residues 21–73 (NTSTASTPRPSSSTHASTTVKATTVATTSTTTATSTSSTTSAKPGSTTHDPNV) is disordered. The chain crosses the membrane as a helical span at residues 99–119 (FAAWWTMLNALILMGAFCIVL). The Intravirion segment spans residues 120–135 (RHCCFQNFTATTTKGY).

It belongs to the herpesviridae glycoprotein N family. In terms of assembly, interacts (via N-terminus) with gM (via N-terminus). The gM-gN heterodimer forms the gCII complex. O-glycosylated.

Its subcellular location is the virion membrane. The protein resides in the host membrane. It localises to the host Golgi apparatus. It is found in the host trans-Golgi network. Its function is as follows. Envelope glycoprotein necessary for proper maturation of gM and modulation of its membrane fusion activity. Also plays a critical role in virion morphogenesis. The protein is Envelope glycoprotein N of Homo sapiens (Human).